The following is a 500-amino-acid chain: Probable cytosol aminopeptidase (500 aa).

K268 and D273 together coordinate Mn(2+). K280 is an active-site residue. Residues D291, D350, and E352 each contribute to the Mn(2+) site. R354 is an active-site residue.

The protein belongs to the peptidase M17 family. Mn(2+) is required as a cofactor.

Its subcellular location is the cytoplasm. It carries out the reaction Release of an N-terminal amino acid, Xaa-|-Yaa-, in which Xaa is preferably Leu, but may be other amino acids including Pro although not Arg or Lys, and Yaa may be Pro. Amino acid amides and methyl esters are also readily hydrolyzed, but rates on arylamides are exceedingly low.. It catalyses the reaction Release of an N-terminal amino acid, preferentially leucine, but not glutamic or aspartic acids.. In terms of biological role, presumably involved in the processing and regular turnover of intracellular proteins. Catalyzes the removal of unsubstituted N-terminal amino acids from various peptides. The chain is Probable cytosol aminopeptidase from Aromatoleum aromaticum (strain DSM 19018 / LMG 30748 / EbN1) (Azoarcus sp. (strain EbN1)).